The chain runs to 224 residues: Cysteine-rich hydrophobic domain-containing protein 1 (224 aa).

Positions Met-1–His-80 are disordered. A compositionally biased stretch (acidic residues) spans Thr-13–Ala-25. The span at Ala-26–Gly-40 shows a compositional bias: low complexity. The segment covering Pro-41–Ala-69 has biased composition (acidic residues). A coiled-coil region spans residues Asp-42–Pro-70.

The protein belongs to the CHIC family. In terms of processing, palmitoylated. In terms of tissue distribution, equally expressed in various parts of the brain.

Its subcellular location is the cell membrane. The protein resides in the cytoplasmic vesicle. The protein is Cysteine-rich hydrophobic domain-containing protein 1 (CHIC1) of Homo sapiens (Human).